Consider the following 462-residue polypeptide: Lysyl endopeptidase (462 aa).

An N-terminal signal peptide occupies residues 1–24 (MHKRTYLNACLVLALAAGASQALA). Positions 25 to 211 (APGASEMAGD…VSYFADSLYK (187 aa)) are excised as a propeptide. 3 disulfide bridges follow: cysteine 224–cysteine 435, cysteine 230–cysteine 305, and cysteine 262–cysteine 284. Residues histidine 283, aspartate 333, and serine 409 each act as charge relay system in the active site.

Belongs to the peptidase S1 family. In terms of processing, experiments performed in E.coli. Processing of pro-endopeptidase to mature endopeptidase is probably autocatalytic, as mutations in the probable active site residues prevent processing, and purified inactive pro-endopeptidase disappears in the presence of active endopeptidase.

Its subcellular location is the secreted. It catalyses the reaction Preferential cleavage: Lys-|-Xaa, including Lys-|-Pro.. In terms of biological role, lysine-specific endoprotease. Involved in corneal virulence. In Pseudomonas aeruginosa (strain ATCC 15692 / DSM 22644 / CIP 104116 / JCM 14847 / LMG 12228 / 1C / PRS 101 / PAO1), this protein is Lysyl endopeptidase (prpL).